Consider the following 615-residue polypeptide: DNA mismatch repair protein MutL (615 aa).

A disordered region spans residues 363–397 (FAEPAVREPVAPRYTPAPASGSRPAAPWPNAQPGY). Residues 378-391 (PAPASGSRPAAPWP) show a composition bias toward low complexity.

The protein belongs to the DNA mismatch repair MutL/HexB family.

Its function is as follows. This protein is involved in the repair of mismatches in DNA. It is required for dam-dependent methyl-directed DNA mismatch repair. May act as a 'molecular matchmaker', a protein that promotes the formation of a stable complex between two or more DNA-binding proteins in an ATP-dependent manner without itself being part of a final effector complex. The sequence is that of DNA mismatch repair protein MutL from Escherichia coli O157:H7 (strain EC4115 / EHEC).